The sequence spans 321 residues: D-alanine--D-alanine ligase (321 aa).

The ATP-grasp domain occupies 121–315 (RIWFLTNNIN…FTNLIEEIIK (195 aa)). 147–199 (PMKRPYVIKPLTQGSSIGVEVIFAEDDFNFADYDFPYGDQVIIEQYIKGRELQ) is an ATP binding site. The Mg(2+) site is built by Glu268, Glu282, and Asn284.

This sequence belongs to the D-alanine--D-alanine ligase family. The cofactor is Mg(2+). It depends on Mn(2+) as a cofactor.

The protein localises to the cytoplasm. The catalysed reaction is 2 D-alanine + ATP = D-alanyl-D-alanine + ADP + phosphate + H(+). It functions in the pathway cell wall biogenesis; peptidoglycan biosynthesis. Its function is as follows. Cell wall formation. This chain is D-alanine--D-alanine ligase, found in Rickettsia rickettsii (strain Iowa).